A 59-amino-acid polypeptide reads, in one-letter code: UPF0339 protein CC_2965 (59 aa).

It belongs to the UPF0339 family.

The chain is UPF0339 protein CC_2965 from Caulobacter vibrioides (strain ATCC 19089 / CIP 103742 / CB 15) (Caulobacter crescentus).